Here is a 93-residue protein sequence, read N- to C-terminus: Large ribosomal subunit protein bL27 (93 aa).

A propeptide spanning residues 1–8 (MIMDLQFF) is cleaved from the precursor. Residues 8–29 (FSHHKGGGSTANGRNSAGRRLG) are disordered.

This sequence belongs to the bacterial ribosomal protein bL27 family. The N-terminus is cleaved by ribosomal processing cysteine protease Prp.

The sequence is that of Large ribosomal subunit protein bL27 from Limosilactobacillus reuteri (strain DSM 20016) (Lactobacillus reuteri).